A 160-amino-acid chain; its full sequence is Arsenate reductase 2.1 (160 aa).

In terms of domain architecture, Rhodanese spans 42 to 143; it reads SNPRVAIIDV…WELSGQPVCR (102 aa). Residue Cys-94 is the Cysteine persulfide intermediate of the active site.

It catalyses the reaction [glutaredoxin]-dithiol + arsenate + glutathione + H(+) = glutathionyl-S-S-[glutaredoxin] + arsenite + H2O. Its function is as follows. Possesses arsenate reductase activity in vitro. Catalyzes the reduction of arsenate [As(V)] to arsenite [As(III)]. May play a role in arsenic retention in roots. Possesses phosphatase activity towards p-nitrophenyl phosphate in vitro. The sequence is that of Arsenate reductase 2.1 (ACR2.1) from Oryza sativa subsp. japonica (Rice).